The primary structure comprises 326 residues: ELAV-like protein 1-B (326 aa).

3 consecutive RRM domains span residues 20–98, 106–186, and 244–322; these read TNLI…FARP, ANLY…FAAN, and WCIF…FKTS.

The protein belongs to the RRM elav family. In terms of assembly, interacts (via RRM3) with cirbp. Unable to form oligomers. Part of a ribonucleoprotein (RNP) complex, at least composed of elavl1/elrA and/or elavl2/elrB, igf2bp3/vg1RBP, ddx6/Xp54, ybx2/frgy2, lsm14b/rap55b and, in a subset of RNP complexes, stau1/staufen.

The protein localises to the cytoplasm. It is found in the cell cortex. Functionally, RNA-binding protein that binds to the 3'-UTR region of mRNAs and increases their stability. Involved in embryonic stem cells (ESCs) differentiation: preferentially binds mRNAs that are not methylated by N6-methyladenosine (m6A), stabilizing them, promoting ESCs differentiation. Binds to poly-U elements and AU-rich elements (AREs) in the 3'-UTR of target mRNAs. Acts cooperatively with cribp to stabilize AU-rich sequence (ARE)-containing mRNAs. May play a role during gastrulation. Required for the vegetal localization of vg1 mRNA. The polypeptide is ELAV-like protein 1-B (elavl1-b) (Xenopus laevis (African clawed frog)).